The chain runs to 364 residues: Guanine nucleotide-binding protein alpha-8 subunit (364 aa).

A lipid anchor (N-myristoyl glycine) is attached at glycine 2. Cysteine 5 carries S-palmitoyl cysteine lipidation. Residues 38-364 enclose the G-alpha domain; sequence KILKLLILGP…QHTMQKVGIQ (327 aa). Positions 41–54 are G1 motif; that stretch reads KLLILGPGESGKST. Residues 46–53, 186–192, 211–215, 280–283, and alanine 336 each bind GTP; these read GPGESGKS, LKSRVPT, DVGGQ, and NKID. Positions 53 and 192 each coordinate Mg(2+). The tract at residues 184-192 is G2 motif; that stretch reads DILKSRVPT. The interval 207 to 216 is G3 motif; that stretch reads FRIFDVGGQR. The interval 276–283 is G4 motif; it reads ILFLNKID. The segment at 334–339 is G5 motif; the sequence is TCATDT.

Belongs to the G-alpha family. As to quaternary structure, g proteins are composed of 3 units; alpha, beta and gamma. The alpha chain contains the guanine nucleotide binding site.

Guanine nucleotide-binding proteins (G proteins) are involved as modulators or transducers in various transmembrane signaling systems. This chain is Guanine nucleotide-binding protein alpha-8 subunit (gpa-8), found in Caenorhabditis elegans.